A 374-amino-acid chain; its full sequence is Nucleosome assembly protein 1;3 (374 aa).

A coiled-coil region spans residues Val-26–Glu-80. Ser-41 is modified (phosphoserine). The Nuclear export signal motif lies at Leu-47 to Gln-62. Residues Lys-222–Lys-227 carry the Nuclear localization signal motif. Residues Ile-299–Glu-339 are compositionally biased toward acidic residues. A disordered region spans residues Ile-299–Gln-374. Residues Thr-343 to Gly-355 show a composition bias toward basic residues. A compositionally biased stretch (basic and acidic residues) spans Gln-364–Gln-374. Cys-371 is modified (cysteine methyl ester). Cys-371 carries S-farnesyl cysteine lipidation. Residues Lys-372 to Gln-374 constitute a propeptide, removed in mature form.

It belongs to the nucleosome assembly protein (NAP) family. In terms of assembly, can form homomeric and heteromeric protein complexes with NAP1;1, NAP1;2 and NAP1;4. Binds histone H2A and associates with chromatin in vivo. As to expression, ubiquitous.

The protein localises to the nucleus. Its subcellular location is the cytoplasm. Its function is as follows. May modulate chromatin structure by regulation of nucleosome assembly/disassembly. May function in nucleotide excision repair (NER). Involved in somatic homologous recombination. Could be involved in response to abscisic acid (ABA) and to salt stress. The protein is Nucleosome assembly protein 1;3 (NAP1;3) of Arabidopsis thaliana (Mouse-ear cress).